Reading from the N-terminus, the 459-residue chain is Exodeoxyribonuclease 7 large subunit (459 aa).

Belongs to the XseA family. As to quaternary structure, heterooligomer composed of large and small subunits.

It localises to the cytoplasm. It catalyses the reaction Exonucleolytic cleavage in either 5'- to 3'- or 3'- to 5'-direction to yield nucleoside 5'-phosphates.. In terms of biological role, bidirectionally degrades single-stranded DNA into large acid-insoluble oligonucleotides, which are then degraded further into small acid-soluble oligonucleotides. This chain is Exodeoxyribonuclease 7 large subunit, found in Yersinia pseudotuberculosis serotype O:3 (strain YPIII).